Consider the following 313-residue polypeptide: MRIREGHLVGDVAGGPIRFRDRVLGYIGLTKPRVIELLLVTTIPAMLLADRGTVDPLLILNTLVGGLLAAAGANTLNCVADADIDKKMKRTERRALARATVPRSHALIFGLALSVLSFFWLWWTTNMLSAHLAGATIAFYVLIYTLVLKRRTSQNVVWGGAAGCMPVMIGWSAVTGTIQWPALVMFLIIFFWTPPHTWALAMRYKEDYEAAGVPMLPVVATERQVTKQILIYTWLTVAATLALALATGWLYAAVAIVAGTWFLAMAHQLYAGVRRGEPVKPLRLFLQSNNYLAVVFCALAVDSALALPTLFSV.

A run of 8 helical transmembrane segments spans residues 34 to 54 (VIEL…RGTV), 56 to 76 (PLLI…ANTL), 105 to 125 (HALI…WWTT), 128 to 148 (LSAH…TLVL), 152 to 172 (TSQN…IGWS), 173 to 193 (AVTG…FFWT), 243 to 263 (LALA…TWFL), and 291 to 311 (YLAV…PTLF).

The protein belongs to the UbiA prenyltransferase family. Protoheme IX farnesyltransferase subfamily.

It is found in the cell membrane. It catalyses the reaction heme b + (2E,6E)-farnesyl diphosphate + H2O = Fe(II)-heme o + diphosphate. Its pathway is porphyrin-containing compound metabolism; heme O biosynthesis; heme O from protoheme: step 1/1. Converts heme B (protoheme IX) to heme O by substitution of the vinyl group on carbon 2 of heme B porphyrin ring with a hydroxyethyl farnesyl side group. The sequence is that of Protoheme IX farnesyltransferase from Mycolicibacterium vanbaalenii (strain DSM 7251 / JCM 13017 / BCRC 16820 / KCTC 9966 / NRRL B-24157 / PYR-1) (Mycobacterium vanbaalenii).